The primary structure comprises 513 residues: ATP synthase subunit alpha (513 aa).

Residue 169–176 (GDRQIGKT) coordinates ATP.

The protein belongs to the ATPase alpha/beta chains family. In terms of assembly, F-type ATPases have 2 components, CF(1) - the catalytic core - and CF(0) - the membrane proton channel. CF(1) has five subunits: alpha(3), beta(3), gamma(1), delta(1), epsilon(1). CF(0) has three main subunits: a(1), b(2) and c(9-12). The alpha and beta chains form an alternating ring which encloses part of the gamma chain. CF(1) is attached to CF(0) by a central stalk formed by the gamma and epsilon chains, while a peripheral stalk is formed by the delta and b chains.

The protein resides in the cell inner membrane. It catalyses the reaction ATP + H2O + 4 H(+)(in) = ADP + phosphate + 5 H(+)(out). Its function is as follows. Produces ATP from ADP in the presence of a proton gradient across the membrane. The alpha chain is a regulatory subunit. The protein is ATP synthase subunit alpha of Francisella tularensis subsp. holarctica (strain OSU18).